The following is a 138-amino-acid chain: Cytochrome b5 (138 aa).

In terms of domain architecture, Cytochrome b5 heme-binding spans 14-90 (GRYYRLEEVQ…SETFIIGELH (77 aa)). Heme contacts are provided by His-49 and His-73. The chain crosses the membrane as a helical span at residues 114-136 (SWSNWVIPAIAAIIVALMYRSYM).

The protein belongs to the cytochrome b5 family.

It localises to the endoplasmic reticulum membrane. The protein localises to the microsome membrane. Its function is as follows. Cytochrome b5 is a membrane-bound hemoprotein functioning as an electron carrier for several membrane-bound oxygenases. The protein is Cytochrome b5 (CYB5A) of Gallus gallus (Chicken).